We begin with the raw amino-acid sequence, 192 residues long: Thymidine kinase (192 aa).

ATP-binding positions include 9 to 16 (SAMNAGKS) and 87 to 90 (DECQ). Glu88 (proton acceptor) is an active-site residue. Zn(2+)-binding residues include Cys145, Cys147, Cys182, and His185.

Belongs to the thymidine kinase family. As to quaternary structure, homotetramer.

It is found in the cytoplasm. It carries out the reaction thymidine + ATP = dTMP + ADP + H(+). This chain is Thymidine kinase, found in Vibrio cholerae serotype O1 (strain ATCC 39315 / El Tor Inaba N16961).